The sequence spans 255 residues: MLNVSGLWAEYQGKPALQDVSLQIASGQLVVVLGPSGCGKTTLLNLIAGFMTPSAGVITLDNIPVSGPSAERGVVFQNEGLLPWRDVVSNVEFGLQLAGMSKEQRRVTALKMLNRVGLAGFEHHFIWQLSGGMRQRVGIARALAVDPRLLLLDEPFGALDAFTREQMQELLLTIWRDTGKQILLITHDIEEAVFLASELLLLSPGPGQVVERLSLNFGQRYAEGEPCRAIKSDPEFIARREDVLGKVFQQREVLI.

An ABC transporter domain is found at 2–229 (LNVSGLWAEY…RYAEGEPCRA (228 aa)). An ATP-binding site is contributed by 34–41 (GPSGCGKT).

It belongs to the ABC transporter superfamily. Taurine importer (TC 3.A.1.17.1) family. As to quaternary structure, the complex is composed of two ATP-binding proteins (TauB), two transmembrane proteins (TauC) and a solute-binding protein (TauA).

Its subcellular location is the cell inner membrane. It carries out the reaction taurine(out) + ATP + H2O = taurine(in) + ADP + phosphate + H(+). In terms of biological role, part of the ABC transporter complex TauABC involved in taurine import. Responsible for energy coupling to the transport system. In Yersinia pestis bv. Antiqua (strain Antiqua), this protein is Taurine import ATP-binding protein TauB.